The chain runs to 95 residues: Aspartyl/glutamyl-tRNA(Asn/Gln) amidotransferase subunit C (95 aa).

It belongs to the GatC family. As to quaternary structure, heterotrimer of A, B and C subunits.

It carries out the reaction L-glutamyl-tRNA(Gln) + L-glutamine + ATP + H2O = L-glutaminyl-tRNA(Gln) + L-glutamate + ADP + phosphate + H(+). The enzyme catalyses L-aspartyl-tRNA(Asn) + L-glutamine + ATP + H2O = L-asparaginyl-tRNA(Asn) + L-glutamate + ADP + phosphate + 2 H(+). Its function is as follows. Allows the formation of correctly charged Asn-tRNA(Asn) or Gln-tRNA(Gln) through the transamidation of misacylated Asp-tRNA(Asn) or Glu-tRNA(Gln) in organisms which lack either or both of asparaginyl-tRNA or glutaminyl-tRNA synthetases. The reaction takes place in the presence of glutamine and ATP through an activated phospho-Asp-tRNA(Asn) or phospho-Glu-tRNA(Gln). This chain is Aspartyl/glutamyl-tRNA(Asn/Gln) amidotransferase subunit C, found in Hyphomonas neptunium (strain ATCC 15444).